A 520-amino-acid polypeptide reads, in one-letter code: MQSLYNSKYAHIFKGPVAKHVTYKFHDLEVTYANIPHLDITVENITPDMIYKSAHLTCSSLFRMYGLSPETDGKLWVLLYRLFTVNEGSYDHRNTIGLELYINHLTAMYEELKVKSELLACVNFALGLGYFYMSYFVMYNHKKGNLLNYLHELCHVIHRYIDQIRLLHMRNPNNYKIEEFMRILRDVFKHYRISQFYDHVMYNHIFGLTRIVSNILCGCSSVCKEHYSIKDRDKSVRGIKTRVKPASAGQSPVLSIPVGFYVNQAISIKTRFPTTGPELFGQAENVIGILRSPVLYHVSQDDVAKIEMCLKTDFYMTEFYNNKEANNYIIPIQSPGCREQEEMMLKLFNNVVFCMYLACQVRQVILSQWKILLTLFRNQFLKIVSLMKGDSFIKICIERLADDIQHHRQSLGAVFKAFLTILPDVLKHVGFPVNDSNALRAHLLVEYLVDDKFAPEIPYDTYVRMARDYRLEILRGNRMPFPIFTLDLAETRNLIFSNEAFHAFYNVISYDDIIPNYSSF.

It belongs to the herpesviridae U4 family.

The polypeptide is Protein U4 (Elephantid herpesvirus 1 (isolate Asian elephant/Berlin/Kiba/1998) (EIHV-1)).